Here is a 359-residue protein sequence, read N- to C-terminus: Phospho-N-acetylmuramoyl-pentapeptide-transferase (359 aa).

The next 10 membrane-spanning stretches (helical) occupy residues 7–27 (RSLT…VNSY), 28–48 (IFNS…SLVI), 82–102 (MGGI…NNYV), 103–123 (DSVG…IGFL), 147–167 (ALIA…NPLI), 179–199 (IVIF…VNLT), 203–223 (DGLA…EIFI), 229–249 (LIIY…FLKY), 256–276 (IFMG…ISIL), and 337–357 (IVEN…VLKI).

Belongs to the glycosyltransferase 4 family. MraY subfamily. Mg(2+) is required as a cofactor.

It is found in the cell inner membrane. It catalyses the reaction UDP-N-acetyl-alpha-D-muramoyl-L-alanyl-gamma-D-glutamyl-meso-2,6-diaminopimeloyl-D-alanyl-D-alanine + di-trans,octa-cis-undecaprenyl phosphate = di-trans,octa-cis-undecaprenyl diphospho-N-acetyl-alpha-D-muramoyl-L-alanyl-D-glutamyl-meso-2,6-diaminopimeloyl-D-alanyl-D-alanine + UMP. It functions in the pathway cell wall biogenesis; peptidoglycan biosynthesis. In terms of biological role, catalyzes the initial step of the lipid cycle reactions in the biosynthesis of the cell wall peptidoglycan: transfers peptidoglycan precursor phospho-MurNAc-pentapeptide from UDP-MurNAc-pentapeptide onto the lipid carrier undecaprenyl phosphate, yielding undecaprenyl-pyrophosphoryl-MurNAc-pentapeptide, known as lipid I. The sequence is that of Phospho-N-acetylmuramoyl-pentapeptide-transferase from Prochlorococcus marinus subsp. pastoris (strain CCMP1986 / NIES-2087 / MED4).